The following is a 549-amino-acid chain: MFS-type transporter TwmF (549 aa).

Transmembrane regions (helical) follow at residues 29–49, 63–83, 99–119, and 126–146; these read IVIGLGITNLLAALENTVLTI, NFIWVTNAFFLSSTAILPLFG, VAIFVLGSGLCGGASTGAMLI, and GVGSGGIIMLSSIIISDLVPL. An N-linked (GlcNAc...) asparagine glycan is attached at asparagine 151. The next 10 helical transmembrane spans lie at 155 to 175, 182 to 202, 221 to 241, 249 to 269, 291 to 311, 328 to 348, 355 to 375, 390 to 410, 421 to 441, and 502 to 522; these read ILMSILGIGSALGPLIGGAIV, WVFYLNLPIGGVSFVFLFIFL, LVGNAIVIASTVAILYALSYA, SWHTLVPLLVGFLGLFIFAGL, IILAINTFVSAALLYWCLFFL, VALLPISLLGIPGSMVGAIAL, KPVHIFAFALQTLGLGLFTLF, IVAFGGGMIFTTMLPAFQAFI, AWYFIRLFGHIWGVAIPAAIF, and VSIAFAGVAFLLTLLEKDVGL.

This sequence belongs to the major facilitator superfamily.

The protein resides in the membrane. Functionally, MFS efflux transporter; part of the gene cluster that mediates the biosynthesis of wortmanamides A and B, reduced long-chain polyketides amidated with a specific omega-amino acid, 5-aminopentanoic acid (5PA). The polypeptide is MFS-type transporter TwmF (Talaromyces wortmannii (Penicillium wortmannii)).